Consider the following 324-residue polypeptide: D-alanine--D-alanine ligase (324 aa).

Positions 121–321 constitute an ATP-grasp domain; it reads NQYLKAFGVR…IKDVMTDIIE (201 aa). 149 to 204 contacts ATP; the sequence is MEKIGLPCFIKPSLGGSSFGVTKVKTKEQIQPAIVKAFEEAQEVLVEAFMEGTELT. Mg(2+) contacts are provided by Asp-275, Glu-288, and Asn-290.

The protein belongs to the D-alanine--D-alanine ligase family. Requires Mg(2+) as cofactor. It depends on Mn(2+) as a cofactor.

Its subcellular location is the cytoplasm. The catalysed reaction is 2 D-alanine + ATP = D-alanyl-D-alanine + ADP + phosphate + H(+). It participates in cell wall biogenesis; peptidoglycan biosynthesis. In terms of biological role, cell wall formation. In Bacteroides thetaiotaomicron (strain ATCC 29148 / DSM 2079 / JCM 5827 / CCUG 10774 / NCTC 10582 / VPI-5482 / E50), this protein is D-alanine--D-alanine ligase.